The sequence spans 239 residues: tRNA (guanine-N(7)-)-methyltransferase (239 aa).

S-adenosyl-L-methionine-binding residues include glutamate 69, glutamate 94, aspartate 121, and aspartate 144. Residue aspartate 144 is part of the active site. Lysine 148 serves as a coordination point for substrate. Residues 150–155 (RHNKRR) are interaction with RNA. Residues aspartate 180 and 217-220 (TKFE) contribute to the substrate site.

Belongs to the class I-like SAM-binding methyltransferase superfamily. TrmB family. As to quaternary structure, monomer.

The catalysed reaction is guanosine(46) in tRNA + S-adenosyl-L-methionine = N(7)-methylguanosine(46) in tRNA + S-adenosyl-L-homocysteine. It participates in tRNA modification; N(7)-methylguanine-tRNA biosynthesis. Its function is as follows. Catalyzes the formation of N(7)-methylguanine at position 46 (m7G46) in tRNA. The sequence is that of tRNA (guanine-N(7)-)-methyltransferase from Salmonella typhi.